A 165-amino-acid chain; its full sequence is Large ribosomal subunit protein uL11 (165 aa).

Belongs to the universal ribosomal protein uL11 family. Part of the ribosomal stalk of the 50S ribosomal subunit. Interacts with L10 and the large rRNA to form the base of the stalk. L10 forms an elongated spine to which L12 dimers bind in a sequential fashion forming a multimeric L10(L12)X complex.

Its function is as follows. Forms part of the ribosomal stalk which helps the ribosome interact with GTP-bound translation factors. The polypeptide is Large ribosomal subunit protein uL11 (Thermococcus kodakarensis (strain ATCC BAA-918 / JCM 12380 / KOD1) (Pyrococcus kodakaraensis (strain KOD1))).